The chain runs to 420 residues: Cyclin-B2-1 (420 aa).

The segment at 1 to 61 (MDRASENRRL…EKSGKEEQKP (61 aa)) is disordered. The span at 49–60 (PMLEKSGKEEQK) shows a compositional bias: basic and acidic residues.

This sequence belongs to the cyclin family. Cyclin AB subfamily. In terms of assembly, interacts with CDKB2-1. As to expression, expressed in the root apices.

Involved in the control of the cell cycle at the G2/M (mitosis) transition. May activate CDKB2-1 kinase. The chain is Cyclin-B2-1 (CYCB2-1) from Oryza sativa subsp. japonica (Rice).